The chain runs to 136 residues: Nucleoside diphosphate kinase (136 aa).

ATP is bound by residues K10, F58, R86, T92, R104, and N114. H117 serves as the catalytic Pros-phosphohistidine intermediate.

It belongs to the NDK family. As to quaternary structure, homotetramer. The cofactor is Mg(2+).

Its subcellular location is the cytoplasm. It catalyses the reaction a 2'-deoxyribonucleoside 5'-diphosphate + ATP = a 2'-deoxyribonucleoside 5'-triphosphate + ADP. The catalysed reaction is a ribonucleoside 5'-diphosphate + ATP = a ribonucleoside 5'-triphosphate + ADP. Its function is as follows. Major role in the synthesis of nucleoside triphosphates other than ATP. The ATP gamma phosphate is transferred to the NDP beta phosphate via a ping-pong mechanism, using a phosphorylated active-site intermediate. The polypeptide is Nucleoside diphosphate kinase (Mycolicibacterium vanbaalenii (strain DSM 7251 / JCM 13017 / BCRC 16820 / KCTC 9966 / NRRL B-24157 / PYR-1) (Mycobacterium vanbaalenii)).